Here is a 262-residue protein sequence, read N- to C-terminus: Tryptophan synthase alpha chain (262 aa).

Residues Glu48 and Asp59 each act as proton acceptor in the active site.

Belongs to the TrpA family. Tetramer of two alpha and two beta chains.

The catalysed reaction is (1S,2R)-1-C-(indol-3-yl)glycerol 3-phosphate + L-serine = D-glyceraldehyde 3-phosphate + L-tryptophan + H2O. Its pathway is amino-acid biosynthesis; L-tryptophan biosynthesis; L-tryptophan from chorismate: step 5/5. Functionally, the alpha subunit is responsible for the aldol cleavage of indoleglycerol phosphate to indole and glyceraldehyde 3-phosphate. The polypeptide is Tryptophan synthase alpha chain (Helicobacter pylori (strain HPAG1)).